The sequence spans 87 residues: Selenoprotein W (87 aa).

A cross-link (cysteinyl-selenocysteine (Cys-Sec); redox-active) is located at residues 10–13 (CGAU). A non-standard amino acid (selenocysteine) is located at residue selenocysteine 13. Cysteine 37 bears the S-glutathionyl cysteine mark.

Belongs to the SelWTH family. Selenoprotein W subfamily. Interacts with DPYSL2, PRDX1, YWHAB, YWHAG, HSP70 and HSP90.

The protein resides in the cytoplasm. In terms of biological role, plays a role as a glutathione (GSH)-dependent antioxidant. May be involved in a redox-related process. May play a role in the myopathies of selenium deficiency. This is Selenoprotein W from Sus scrofa (Pig).